Consider the following 238-residue polypeptide: Uridylate kinase (238 aa).

Residue 12-15 (KLSG) participates in ATP binding. Gly-54 serves as a coordination point for UMP. Residues Gly-55 and Arg-59 each contribute to the ATP site. Residues Asp-74 and 135-142 (TGNPYFTT) each bind UMP. ATP contacts are provided by Thr-162, Asn-163, Tyr-168, and Asp-171.

The protein belongs to the UMP kinase family. As to quaternary structure, homohexamer.

The protein resides in the cytoplasm. It catalyses the reaction UMP + ATP = UDP + ADP. It functions in the pathway pyrimidine metabolism; CTP biosynthesis via de novo pathway; UDP from UMP (UMPK route): step 1/1. Its activity is regulated as follows. Inhibited by UTP. Catalyzes the reversible phosphorylation of UMP to UDP. In Bradyrhizobium sp. (strain BTAi1 / ATCC BAA-1182), this protein is Uridylate kinase.